The following is a 650-amino-acid chain: Protein ANTI-SILENCING 1 (650 aa).

Residues 38-169 (DEYRLYDCVL…VGSCKVVDTI (132 aa)) enclose the BAH domain. Disordered stretches follow at residues 202–223 (NGKS…GSVR), 229–248 (AFES…EKEK), 257–359 (KSTL…QKLD), and 425–448 (VTEK…ADDN). 2 stretches are compositionally biased toward basic and acidic residues: residues 259 to 270 (TLAEERSNKDSG) and 277 to 287 (NGKDQESEVKK). Polar residues predominate over residues 302-315 (SNSFEASGSRTIHS). 2 stretches are compositionally biased toward basic and acidic residues: residues 348–358 (LDDRPLKKQKL) and 438–448 (RAEDKMSADDN). Positions 486-569 (TVVLLQNLDP…RPLVASFAKI (84 aa)) constitute an RRM domain.

In terms of assembly, component of the ASI1-AIPP1-EDM2 (AAE) RNA regulatory complex composed of at least AIPP1/EDM3, ASI1 and EDM2 and may contain CPL2, AIPP2 and AIPP3/BDT1. Binds directly to AIPP1/EDM3 and AIPP2.

Functionally, collaboratively with AIPP1/EDM3 and EDM2, the AAE complex regulates alternative RNA processing (e.g. alternative splicing) and epigenetic silencing (e.g. H3K9me2) of intronic heterochromatin-containing genes as well as genic heterochromatin-containing genes by promoting distal 3' polyadenylation; may associate with intronic heterochromatin and bind gene transcripts to modulate polyadenylation. Required to prevent promoter DNA hypermethylation and transcriptional silencing of some transgenes. Plays a similar role to that of the histone H3K9 demethylase JMJ25/IBM1 in preventing CHG methylation in the bodies of numerous genes. RNA-binding protein that ensures the proper expression of JMJ25/IBM1 full-length transcript by associating with an intronic heterochromatic repeat element of JMJ25/IBM1. Also modulates transposable elements (TE) expression. Contributes to a unique mechanism to deal with the collateral effect of silencing intronic repeat elements. This is Protein ANTI-SILENCING 1 from Arabidopsis thaliana (Mouse-ear cress).